A 256-amino-acid chain; its full sequence is Small ribosomal subunit protein uS2 (256 aa).

The disordered stretch occupies residues 229-256 (PVDDNGDYGDFDEAIDEYADETDASESE). The span at 232–256 (DNGDYGDFDEAIDEYADETDASESE) shows a compositional bias: acidic residues.

It belongs to the universal ribosomal protein uS2 family.

In Picosynechococcus sp. (strain ATCC 27264 / PCC 7002 / PR-6) (Agmenellum quadruplicatum), this protein is Small ribosomal subunit protein uS2.